A 446-amino-acid polypeptide reads, in one-letter code: Histidine--tRNA ligase (446 aa).

It belongs to the class-II aminoacyl-tRNA synthetase family. Homodimer.

The protein localises to the cytoplasm. The catalysed reaction is tRNA(His) + L-histidine + ATP = L-histidyl-tRNA(His) + AMP + diphosphate + H(+). The chain is Histidine--tRNA ligase from Burkholderia pseudomallei (strain 668).